A 521-amino-acid polypeptide reads, in one-letter code: Glucose-1-phosphate adenylyltransferase large subunit 2, chloroplastic/amyloplastic (521 aa).

The transit peptide at 1–47 (MQFSSVLPLEGKACMSPVRRGSGGYGSERMRINCCSIRRNKALRRMC) directs the protein to the chloroplast.

This sequence belongs to the bacterial/plant glucose-1-phosphate adenylyltransferase family. Heterotetramer. Abundant in the embryo and is also present in the endosperm.

The protein localises to the plastid. Its subcellular location is the chloroplast. It is found in the amyloplast. It catalyses the reaction alpha-D-glucose 1-phosphate + ATP + H(+) = ADP-alpha-D-glucose + diphosphate. Its pathway is glycan biosynthesis; starch biosynthesis. Activated by 3'phosphoglycerate, inhibited by orthophosphate. Allosteric regulation. This protein plays a role in synthesis of starch. It catalyzes the synthesis of the activated glycosyl donor, ADP-glucose from Glc-1-P and ATP. The chain is Glucose-1-phosphate adenylyltransferase large subunit 2, chloroplastic/amyloplastic (AGP2) from Zea mays (Maize).